Here is a 220-residue protein sequence, read N- to C-terminus: Glycerol-3-phosphate acyltransferase (220 aa).

5 helical membrane passes run 4–24 (LTIL…AVLV), 53–73 (VAAL…VYLA), 80–100 (PVYL…PIFF), 116–136 (MPIG…VLLV), and 138–158 (GYSS…TYLI). Residues 193-220 (WGRQAQRRQEEVGEMDDVAQKRDERDKK) form a disordered region. Basic and acidic residues predominate over residues 210 to 220 (VAQKRDERDKK).

The protein belongs to the PlsY family. Probably interacts with PlsX.

It localises to the cell inner membrane. The catalysed reaction is an acyl phosphate + sn-glycerol 3-phosphate = a 1-acyl-sn-glycero-3-phosphate + phosphate. It participates in lipid metabolism; phospholipid metabolism. Its function is as follows. Catalyzes the transfer of an acyl group from acyl-phosphate (acyl-PO(4)) to glycerol-3-phosphate (G3P) to form lysophosphatidic acid (LPA). This enzyme utilizes acyl-phosphate as fatty acyl donor, but not acyl-CoA or acyl-ACP. The sequence is that of Glycerol-3-phosphate acyltransferase from Aeromonas salmonicida (strain A449).